Reading from the N-terminus, the 418-residue chain is Glutamyl-tRNA(Gln) amidotransferase subunit D (418 aa).

Residues 74-405 enclose the Asparaginase/glutaminase domain; that stretch reads KNISILSTGG…KEAKELMSKN (332 aa). Residues threonine 84, threonine 160, aspartate 161, and lysine 237 contribute to the active site.

The protein belongs to the asparaginase 1 family. GatD subfamily. Heterodimer of GatD and GatE.

The catalysed reaction is L-glutamyl-tRNA(Gln) + L-glutamine + ATP + H2O = L-glutaminyl-tRNA(Gln) + L-glutamate + ADP + phosphate + H(+). Allows the formation of correctly charged Gln-tRNA(Gln) through the transamidation of misacylated Glu-tRNA(Gln) in organisms which lack glutaminyl-tRNA synthetase. The reaction takes place in the presence of glutamine and ATP through an activated gamma-phospho-Glu-tRNA(Gln). The GatDE system is specific for glutamate and does not act on aspartate. The polypeptide is Glutamyl-tRNA(Gln) amidotransferase subunit D (Methanococcus maripaludis (strain DSM 14266 / JCM 13030 / NBRC 101832 / S2 / LL)).